Reading from the N-terminus, the 475-residue chain is SAM50-like protein SPAC17C9.06 (475 aa).

Positions 44–130 constitute a POTRA domain; the sequence is VGISSIRVTG…LDVTIQVKEK (87 aa).

This sequence belongs to the SAM50/omp85 family. As to quaternary structure, associates with the mitochondrial contact site and cristae organizing system (MICOS) complex (also known as MINOS or MitOS complex).

The protein localises to the mitochondrion outer membrane. Its function is as follows. May be required for the assembly pathway of mitochondrial outer membrane proteins. This is SAM50-like protein SPAC17C9.06 from Schizosaccharomyces pombe (strain 972 / ATCC 24843) (Fission yeast).